A 368-amino-acid polypeptide reads, in one-letter code: Probable protein phosphatase 2C 58 (368 aa).

The PPM-type phosphatase domain occupies 23-329 (KFGLSSMQGW…DNMTMILVQF (307 aa)). Residues aspartate 57, glycine 58, aspartate 272, and aspartate 320 each contribute to the Mn(2+) site. A disordered region spans residues 336–368 (NKNVSPAEQSAADKQPTGDTHWSEIHVTEESSS). The span at 356–368 (HWSEIHVTEESSS) shows a compositional bias: basic and acidic residues.

Belongs to the PP2C family. Mg(2+) is required as a cofactor. It depends on Mn(2+) as a cofactor.

It carries out the reaction O-phospho-L-seryl-[protein] + H2O = L-seryl-[protein] + phosphate. The catalysed reaction is O-phospho-L-threonyl-[protein] + H2O = L-threonyl-[protein] + phosphate. The polypeptide is Probable protein phosphatase 2C 58 (Oryza sativa subsp. japonica (Rice)).